The sequence spans 262 residues: Ribose-5-phosphate isomerase A (262 aa).

Substrate is bound by residues 33–36 (TGST), 89–92 (DGAD), and 102–105 (KGGG). The Proton acceptor role is filled by Glu111. Residue Lys129 participates in substrate binding.

The protein belongs to the ribose 5-phosphate isomerase family. In terms of assembly, homodimer.

It catalyses the reaction aldehydo-D-ribose 5-phosphate = D-ribulose 5-phosphate. It participates in carbohydrate degradation; pentose phosphate pathway; D-ribose 5-phosphate from D-ribulose 5-phosphate (non-oxidative stage): step 1/1. Functionally, catalyzes the reversible conversion of ribose-5-phosphate to ribulose 5-phosphate. In Ruegeria pomeroyi (strain ATCC 700808 / DSM 15171 / DSS-3) (Silicibacter pomeroyi), this protein is Ribose-5-phosphate isomerase A.